The primary structure comprises 325 residues: Probable isoaspartyl peptidase/L-asparaginase 2 (325 aa).

The active-site Nucleophile is Thr-195. Residues 223–226 (RIGD) and 245–248 (TGEG) each bind substrate.

This sequence belongs to the Ntn-hydrolase family. In terms of assembly, heterotetramer of two alpha and two beta chains arranged as a dimer of alpha/beta heterodimers. Cleaved into an alpha and beta chain by autocatalysis; this activates the enzyme. The N-terminal residue of the beta subunit is responsible for the nucleophile hydrolase activity.

The catalysed reaction is Cleavage of a beta-linked Asp residue from the N-terminus of a polypeptide.. In terms of biological role, acts in asparagine catabolism and also in the final steps of protein degradation via hydrolysis of a range of isoaspartyl dipeptides. The protein is Probable isoaspartyl peptidase/L-asparaginase 2 of Arabidopsis thaliana (Mouse-ear cress).